Consider the following 209-residue polypeptide: Protein GrpE (209 aa).

Composition is skewed to basic and acidic residues over residues M1–S16 and K34–K44. The interval M1–E61 is disordered.

Belongs to the GrpE family. Homodimer.

Its subcellular location is the cytoplasm. Participates actively in the response to hyperosmotic and heat shock by preventing the aggregation of stress-denatured proteins, in association with DnaK and GrpE. It is the nucleotide exchange factor for DnaK and may function as a thermosensor. Unfolded proteins bind initially to DnaJ; upon interaction with the DnaJ-bound protein, DnaK hydrolyzes its bound ATP, resulting in the formation of a stable complex. GrpE releases ADP from DnaK; ATP binding to DnaK triggers the release of the substrate protein, thus completing the reaction cycle. Several rounds of ATP-dependent interactions between DnaJ, DnaK and GrpE are required for fully efficient folding. The protein is Protein GrpE of Methanosarcina acetivorans (strain ATCC 35395 / DSM 2834 / JCM 12185 / C2A).